The primary structure comprises 109 residues: Protein FAM32A-like (109 aa).

Residues 1–48 (MSEYKSVQKGSLKLKGVSLPSKKKKKKNKEMKRLEEQVLTSENEEGTK) form a disordered region. The segment covering 9–20 (KGSLKLKGVSLP) has biased composition (low complexity). Residues 21–30 (SKKKKKKNKE) show a composition bias toward basic residues.

Belongs to the FAM32 family.

It localises to the nucleus. May induce G2 arrest and apoptosis. May also increase cell sensitivity to apoptotic stimuli. The sequence is that of Protein FAM32A-like (fam32al) from Danio rerio (Zebrafish).